Consider the following 445-residue polypeptide: CBL-interacting protein kinase 3 (445 aa).

Positions 19–274 (YELGRAIGQG…TSQVLQDQWF (256 aa)) constitute a Protein kinase domain. Residues 25-33 (IGQGTFAKV) and K48 contribute to the ATP site. The Proton acceptor role is filled by D142. Residues 160–189 (DFGLSAISEQVKADGLLHTTCGTPNYVAPE) form an activation loop region. Positions 309–336 (AMEEQPTLMNAFELISLNKGLNLDNFFE) constitute an NAF domain. The segment at 342–371 (KRETRFTSQCPPKEIINRIEEAANLLGFNI) is PPI.

Belongs to the protein kinase superfamily. CAMK Ser/Thr protein kinase family. SNF1 subfamily. It depends on Mn(2+) as a cofactor.

It catalyses the reaction L-seryl-[protein] + ATP = O-phospho-L-seryl-[protein] + ADP + H(+). The enzyme catalyses L-threonyl-[protein] + ATP = O-phospho-L-threonyl-[protein] + ADP + H(+). Its function is as follows. CIPK serine-threonine protein kinases interact with CBL proteins. Binding of a CBL protein to the regulatory NAF domain of CIPK protein lead to the activation of the kinase in a calcium-dependent manner. The sequence is that of CBL-interacting protein kinase 3 (CIPK3) from Oryza sativa subsp. japonica (Rice).